A 450-amino-acid chain; its full sequence is Protein tweety homolog 1 (450 aa).

Over 1–43 (MGAPPGYRPSAWVHLLHQLPRADFQLRPVPSGFAPRDQEYQQA) the chain is Extracellular. A helical membrane pass occupies residues 44 to 64 (LLLVAALAGLGLGLSLIFIAV). At 65-88 (YLIRFCCCRPPEPHGAKSPPPGGG) the chain is on the cytoplasmic side. A helical membrane pass occupies residues 89–109 (CVTWSCIAALLVGCAGIGIGF). Over 110–214 (YGNSETSDGV…DVTFVEEYRW (105 aa)) the chain is Extracellular. Asn-130 carries an N-linked (GlcNAc...) asparagine glycan. The chain crosses the membrane as a helical span at residues 215-235 (LAYVLLLLLVLLVCLFTLLGL). Residues 236 to 240 (AKQSK) lie on the Cytoplasmic side of the membrane. The helical transmembrane segment at 241–261 (WLVVVMTAMSLLVLVLSWGSM) threads the bilayer. The Extracellular portion of the chain corresponds to 262–390 (GLEAATAVGL…LRGLCEDALE (129 aa)). Disulfide bonds link Cys-275-Cys-385 and Cys-303-Cys-370. N-linked (GlcNAc...) asparagine glycans are attached at residues Asn-284 and Asn-355. A helical transmembrane segment spans residues 391–411 (GLLFLMLFSLLSAGALATTLC). Topologically, residues 412-450 (SLPRAWALFPPSDDYDDTDDDDPFNPQESKRFVQWQSSI) are cytoplasmic. A disordered region spans residues 428 to 450 (DTDDDDPFNPQESKRFVQWQSSI). Position 440 is a phosphoserine (Ser-440).

It belongs to the tweety family. As to quaternary structure, homotetramer; disulfide-linked. Homodimer. Post-translationally, N-glycosylated. Contains high-mannose, hybrid and complex oligosaccharides. As to expression, expressed in the astrocytes (at protein level). Restricted mainly to neural tissues. Strongly expressed in brain and eye.

It is found in the cell membrane. It carries out the reaction chloride(in) = chloride(out). The catalysed reaction is L-glutamate(out) = L-glutamate(in). Its activity is regulated as follows. Inhibited by (4-[(2-butyl-6,7-dichloro-2- cyclopentyl-2,3-dihydro-1-oxo-1H-inden-5-yl)oxy]butanoic acid). Functionally, calcium-independent, swelling-dependent volume-regulated anion channel (VRAC-swell) which plays a pivotal role in the process of regulatory volume decrease (RVD) in the brain through the efflux of anions like chloride and organic osmolytes like glutamate. In Mus musculus (Mouse), this protein is Protein tweety homolog 1 (Ttyh1).